The chain runs to 100 residues: Small ribosomal subunit protein uS14c (100 aa).

Belongs to the universal ribosomal protein uS14 family. In terms of assembly, part of the 30S ribosomal subunit.

It localises to the plastid. It is found in the chloroplast. Its function is as follows. Binds 16S rRNA, required for the assembly of 30S particles. This Calycanthus floridus var. glaucus (Eastern sweetshrub) protein is Small ribosomal subunit protein uS14c.